Reading from the N-terminus, the 101-residue chain is A-type ATP synthase subunit F (101 aa).

The protein belongs to the V-ATPase F subunit family. As to quaternary structure, has multiple subunits with at least A(3), B(3), C, D, E, F, H, I and proteolipid K(x).

Its subcellular location is the cell membrane. Its function is as follows. Component of the A-type ATP synthase that produces ATP from ADP in the presence of a proton gradient across the membrane. This chain is A-type ATP synthase subunit F, found in Methanosarcina acetivorans (strain ATCC 35395 / DSM 2834 / JCM 12185 / C2A).